The sequence spans 209 residues: 3-dehydroquinate dehydratase (209 aa).

Residues S6, 25–27, and R55 contribute to the 3-dehydroquinate site; that span reads ELR. The active-site Proton donor/acceptor is H109. The active-site Schiff-base intermediate with substrate is the K134. Residues R172 and Q195 each contribute to the 3-dehydroquinate site.

This sequence belongs to the type-I 3-dehydroquinase family. As to quaternary structure, homodimer.

It catalyses the reaction 3-dehydroquinate = 3-dehydroshikimate + H2O. It participates in metabolic intermediate biosynthesis; chorismate biosynthesis; chorismate from D-erythrose 4-phosphate and phosphoenolpyruvate: step 3/7. Its function is as follows. Involved in the third step of the chorismate pathway, which leads to the biosynthesis of aromatic amino acids. Catalyzes the cis-dehydration of 3-dehydroquinate (DHQ) and introduces the first double bond of the aromatic ring to yield 3-dehydroshikimate. The protein is 3-dehydroquinate dehydratase of Methanoregula boonei (strain DSM 21154 / JCM 14090 / 6A8).